Consider the following 628-residue polypeptide: Probable potassium transport system protein Kup 1 (628 aa).

Transmembrane regions (helical) follow at residues 18 to 38, 58 to 78, 106 to 126, 141 to 161, 175 to 195, 219 to 239, 253 to 273, 285 to 305, 343 to 363, 371 to 391, 401 to 421, and 425 to 445; these read ITLAALGVVYGDLGTSPLYAL, IVSLFFWTIMIVVSFKYVLLV, ALLMLLGLVGVGLFIGDAVIT, ITPELAPFVLPITLTVLVILF, FGPIMLLWFGVLAALGAYEIV, IAFITLGAVVLCVTGTEALYA, WGSLVMPALLLNYFGQGALLL, LLAPSWLAFPLLILATLATVI, IYLPLVNWLLLGGIIIVIIWF, AAYGIAVTGTMALTTLLLMVV, WLIALICAPLLLVDVTFFAAN, and FLAGGWLPILFALLAIIVMTT.

The protein belongs to the HAK/KUP transporter (TC 2.A.72) family.

Its subcellular location is the cell inner membrane. It carries out the reaction K(+)(in) + H(+)(in) = K(+)(out) + H(+)(out). Functionally, transport of potassium into the cell. Likely operates as a K(+):H(+) symporter. This chain is Probable potassium transport system protein Kup 1, found in Aeromonas hydrophila subsp. hydrophila (strain ATCC 7966 / DSM 30187 / BCRC 13018 / CCUG 14551 / JCM 1027 / KCTC 2358 / NCIMB 9240 / NCTC 8049).